Here is a 436-residue protein sequence, read N- to C-terminus: Cold sensitive U2 snRNA suppressor 1 (436 aa).

Residues M1–S10 are compositionally biased toward basic residues. The segment at M1–N22 is disordered. The segment covering N12 to N22 has biased composition (low complexity). 2 positions are modified to phosphothreonine: T104 and T112. Phosphoserine is present on S114. Residues E374–K436 form a disordered region. Over residues G389–E408 the composition is skewed to basic and acidic residues.

This sequence to mammalian SAP 145. Some, to C.elegans ZK632.11. In terms of assembly, belongs to the CWC complex (or CEF1-associated complex), a spliceosome sub-complex reminiscent of a late-stage spliceosome composed of the U2, U5 and U6 snRNAs and at least BUD13, BUD31, BRR2, CDC40, CEF1, CLF1, CUS1, CWC2, CWC15, CWC21, CWC22, CWC23, CWC24, CWC25, CWC27, ECM2, HSH155, IST3, ISY1, LEA1, MSL1, NTC20, PRP8, PRP9, PRP11, PRP19, PRP21, PRP22, PRP45, PRP46, SLU7, SMB1, SMD1, SMD2, SMD3, SMX2, SMX3, SNT309, SNU114, SPP2, SYF1, SYF2, RSE1 and YJU2. Interacts with RDS3.

It is found in the nucleus. Essential splicing protein required for U2 snRNP binding to pre-mRNA during spliceosome assembly. The chain is Cold sensitive U2 snRNA suppressor 1 (CUS1) from Saccharomyces cerevisiae (strain ATCC 204508 / S288c) (Baker's yeast).